Reading from the N-terminus, the 155-residue chain is Crossover junction endodeoxyribonuclease RuvC (155 aa).

Active-site residues include Asp7, Glu68, and Asp140. Asp7, Glu68, and Asp140 together coordinate Mg(2+).

This sequence belongs to the RuvC family. In terms of assembly, homodimer which binds Holliday junction (HJ) DNA. The HJ becomes 2-fold symmetrical on binding to RuvC with unstacked arms; it has a different conformation from HJ DNA in complex with RuvA. In the full resolvosome a probable DNA-RuvA(4)-RuvB(12)-RuvC(2) complex forms which resolves the HJ. Requires Mg(2+) as cofactor.

The protein resides in the cytoplasm. It carries out the reaction Endonucleolytic cleavage at a junction such as a reciprocal single-stranded crossover between two homologous DNA duplexes (Holliday junction).. Its function is as follows. The RuvA-RuvB-RuvC complex processes Holliday junction (HJ) DNA during genetic recombination and DNA repair. Endonuclease that resolves HJ intermediates. Cleaves cruciform DNA by making single-stranded nicks across the HJ at symmetrical positions within the homologous arms, yielding a 5'-phosphate and a 3'-hydroxyl group; requires a central core of homology in the junction. The consensus cleavage sequence is 5'-(A/T)TT(C/G)-3'. Cleavage occurs on the 3'-side of the TT dinucleotide at the point of strand exchange. HJ branch migration catalyzed by RuvA-RuvB allows RuvC to scan DNA until it finds its consensus sequence, where it cleaves and resolves the cruciform DNA. The chain is Crossover junction endodeoxyribonuclease RuvC from Prochlorococcus marinus (strain SARG / CCMP1375 / SS120).